Consider the following 339-residue polypeptide: Dihydroorotate dehydrogenase (quinone) (339 aa).

FMN is bound by residues 62–66 (AGMDK) and Thr86. Lys66 is a substrate binding site. A substrate-binding site is contributed by 111–115 (NRMGF). The FMN site is built by Asn139 and Asn172. Residue Asn172 coordinates substrate. Ser175 functions as the Nucleophile in the catalytic mechanism. Position 177 (Asn177) interacts with substrate. 2 residues coordinate FMN: Lys217 and Thr245. Residue 246–247 (NT) coordinates substrate. FMN contacts are provided by residues Gly268, Gly297, and 318–319 (YS).

It belongs to the dihydroorotate dehydrogenase family. Type 2 subfamily. Monomer. Requires FMN as cofactor.

It localises to the cell membrane. It catalyses the reaction (S)-dihydroorotate + a quinone = orotate + a quinol. It functions in the pathway pyrimidine metabolism; UMP biosynthesis via de novo pathway; orotate from (S)-dihydroorotate (quinone route): step 1/1. In terms of biological role, catalyzes the conversion of dihydroorotate to orotate with quinone as electron acceptor. This chain is Dihydroorotate dehydrogenase (quinone), found in Shewanella baltica (strain OS223).